A 524-amino-acid chain; its full sequence is Lysophospholipid acyltransferase LPCAT4 (524 aa).

The next 2 helical transmembrane spans lie at 40 to 62 (CLLGVLLAPIRVLLAFIVLFLLW) and 87 to 107 (TVCHNGVLGLSRLLFFLLGFL). The short motif at 129–134 (HSTFFD) is the HXXXXD motif element. Asparagine 152 carries an N-linked (GlcNAc...) asparagine glycan. Positions 490–524 (PHKPRSTSQIPNASSPSSPTALANGTVQAPKQKGD) are disordered. Polar residues predominate over residues 495 to 518 (STSQIPNASSPSSPTALANGTVQA).

Belongs to the 1-acyl-sn-glycerol-3-phosphate acyltransferase family. As to expression, widely expressed with much higher level in brain. Expressed in erythroleukemic cells but not in reticulocytes.

It localises to the endoplasmic reticulum membrane. It catalyses the reaction a 1-acyl-sn-glycero-3-phosphoethanolamine + an acyl-CoA = a 1,2-diacyl-sn-glycero-3-phosphoethanolamine + CoA. The catalysed reaction is a 1-O-(1Z-alkenyl)-sn-glycero-3-phosphoethanolamine + an acyl-CoA = a 1-O-(1Z-alkenyl)-2-acyl-sn-glycero-3-phosphoethanolamine + CoA. It carries out the reaction a 1-acyl-sn-glycero-3-phosphocholine + an acyl-CoA = a 1,2-diacyl-sn-glycero-3-phosphocholine + CoA. The enzyme catalyses a 1-O-alkyl-sn-glycero-3-phosphocholine + acetyl-CoA = a 1-O-alkyl-2-acetyl-sn-glycero-3-phosphocholine + CoA. It catalyses the reaction a 1-acyl-sn-glycero-3-phospho-L-serine + an acyl-CoA = a 1,2-diacyl-sn-glycero-3-phospho-L-serine + CoA. The catalysed reaction is octanoyl-CoA + a 1-acyl-sn-glycero-3-phosphoethanolamine = 1-acyl-2-octanoyl-sn-glycero-3-phosphoethanolamine + CoA. It carries out the reaction a 1-acyl-sn-glycero-3-phosphoethanolamine + hexadecanoyl-CoA = 1-acyl-2-hexadecanoyl-sn-glycero-3-phosphoethanolamine + CoA. The enzyme catalyses a 1-acyl-sn-glycero-3-phosphoethanolamine + octadecanoyl-CoA = 1-acyl-2-octadecanoyl-sn-glycero-3-phosphoethanolamine + CoA. It catalyses the reaction a 1-acyl-sn-glycero-3-phosphoethanolamine + (9Z)-octadecenoyl-CoA = 1-acyl-2-(9Z)-octadecenoyl-sn-glycero-3-phosphoethanolamine + CoA. The catalysed reaction is a 1-acyl-sn-glycero-3-phosphoethanolamine + (5Z,8Z,11Z,14Z)-eicosatetraenoyl-CoA = 1-acyl-2-(5Z,8Z,11Z,14Z)-eicosatetraenoyl-sn-glycero-3-phosphoethanolamine + CoA. It carries out the reaction a 1-O-(1Z-alkenyl)-sn-glycero-3-phosphoethanolamine + octanoyl-CoA = 1-O-(1Z)-alkenyl-2-octanoyl-sn-glycero-3-phosphoethanolamine + CoA. The enzyme catalyses a 1-O-(1Z-alkenyl)-sn-glycero-3-phosphoethanolamine + hexadecanoyl-CoA = 1-O-(1Z)-alkenyl-2-hexadecanoyl-sn-glycero-3-phosphoethanolamine + CoA. It catalyses the reaction a 1-O-(1Z-alkenyl)-sn-glycero-3-phosphoethanolamine + octadecanoyl-CoA = 1-O-(1Z)-alkenyl-2-octadecanoyl-sn-glycero-3-phosphoethanolamine + CoA. The catalysed reaction is a 1-O-(1Z-alkenyl)-sn-glycero-3-phosphoethanolamine + (9Z)-octadecenoyl-CoA = 1-O-(1Z)-alkenyl-2-(9Z)-octadecenoyl-sn-glycero-3-phosphoethanolamine + CoA. It carries out the reaction a 1-O-(1Z-alkenyl)-sn-glycero-3-phosphoethanolamine + (5Z,8Z,11Z,14Z)-eicosatetraenoyl-CoA = 1-O-(1Z)-alkenyl-2-(5Z,8Z,11Z,14Z)-eicosatetraenoyl-sn-glycero-3-phosphoethanolamine + CoA. The enzyme catalyses a 1-acyl-sn-glycero-3-phosphocholine + hexadecanoyl-CoA = 1-acyl-2-hexadecanoyl-sn-glycero-3-phosphocholine + CoA. It catalyses the reaction a 1-acyl-sn-glycero-3-phosphocholine + (9Z)-octadecenoyl-CoA = a 1-acyl-2-(9Z)-octadecenoyl-sn-glycero-3-phosphocholine + CoA. The catalysed reaction is 1-O-hexadecyl-sn-glycero-3-phosphocholine + (9Z)-octadecenoyl-CoA = 1-O-hexadecyl-2-(9Z)-octadecenoyl-sn-glycero-3-phosphocholine + CoA. It carries out the reaction 1-O-hexadecyl-sn-glycero-3-phosphocholine + (5Z,8Z,11Z,14Z)-eicosatetraenoyl-CoA = 1-O-hexadecyl-2-(5Z,8Z,11Z,14Z)-eicosatetraenoyl-sn-glycero-3-phosphocholine + CoA. The enzyme catalyses 1-hexadecanoyl-sn-glycero-3-phospho-L-serine + (9Z)-octadecenoyl-CoA = 1-hexadecanoyl-2-(9Z-octadecenoyl)-sn-glycero-3-phospho-L-serine + CoA. It catalyses the reaction 1-octadecanoyl-sn-glycero-3-phospho-(1'-sn-glycerol) + (9Z)-octadecenoyl-CoA = 1-octadecanoyl-2-(9Z-octadecenoyl)-sn-glycero-3-phospho-(1'-sn-glycerol) + CoA. The catalysed reaction is 1-octadecanoyl-sn-glycero-3-phospho-(1'-sn-glycerol) + (5Z,8Z,11Z,14Z)-eicosatetraenoyl-CoA = 1-octadecanoyl-2-(5Z,8Z,11Z,14Z-eicosatetraenoyl)-sn-glycero-3-phospho-(1'-sn-glycerol) + CoA. The protein operates within lipid metabolism; phospholipid metabolism. In terms of biological role, displays acyl-CoA-dependent lysophospholipid acyltransferase activity with a subset of lysophospholipids as substrates; converts lysophosphatidylethanolamine to phosphatidylethanolamine, 1-alkenyl-lysophatidylethanolamine to 1-alkenyl-phosphatidylethanolamine, lysophosphatidylglycerol and alkyl-lysophosphatidylcholine to phosphatidylglycerol and alkyl-phosphatidylcholine, respectively. In contrast, has no lysophosphatidylinositol, glycerol-3-phosphate, diacylglycerol or lysophosphatidic acid acyltransferase activity. Prefers long chain acyl-CoAs (C16, C18) as acyl donors. Converts lysophosphatidylcholine to phosphatidycholine. The chain is Lysophospholipid acyltransferase LPCAT4 (Lpcat4) from Mus musculus (Mouse).